The primary structure comprises 503 residues: ATP synthase subunit alpha, chloroplastic (503 aa).

170–177 (GDRQTGKT) provides a ligand contact to ATP.

It belongs to the ATPase alpha/beta chains family. As to quaternary structure, F-type ATPases have 2 components, CF(1) - the catalytic core - and CF(0) - the membrane proton channel. CF(1) has five subunits: alpha(3), beta(3), gamma(1), delta(1), epsilon(1). CF(0) has four main subunits: a, b, b' and c.

The protein localises to the plastid. The protein resides in the chloroplast thylakoid membrane. The catalysed reaction is ATP + H2O + 4 H(+)(in) = ADP + phosphate + 5 H(+)(out). In terms of biological role, produces ATP from ADP in the presence of a proton gradient across the membrane. The alpha chain is a regulatory subunit. The chain is ATP synthase subunit alpha, chloroplastic from Trieres chinensis (Marine centric diatom).